Here is a 102-residue protein sequence, read N- to C-terminus: UPF0751 protein Dhaf_1351 (102 aa).

It belongs to the UPF0751 family.

The protein is UPF0751 protein Dhaf_1351 of Desulfitobacterium hafniense (strain DSM 10664 / DCB-2).